The following is a 371-amino-acid chain: 4-hydroxy-3-methylbut-2-en-1-yl diphosphate synthase (flavodoxin) (371 aa).

[4Fe-4S] cluster contacts are provided by Cys-268, Cys-271, Cys-303, and Glu-310.

This sequence belongs to the IspG family. Requires [4Fe-4S] cluster as cofactor.

It carries out the reaction (2E)-4-hydroxy-3-methylbut-2-enyl diphosphate + oxidized [flavodoxin] + H2O + 2 H(+) = 2-C-methyl-D-erythritol 2,4-cyclic diphosphate + reduced [flavodoxin]. It participates in isoprenoid biosynthesis; isopentenyl diphosphate biosynthesis via DXP pathway; isopentenyl diphosphate from 1-deoxy-D-xylulose 5-phosphate: step 5/6. In terms of biological role, converts 2C-methyl-D-erythritol 2,4-cyclodiphosphate (ME-2,4cPP) into 1-hydroxy-2-methyl-2-(E)-butenyl 4-diphosphate. The polypeptide is 4-hydroxy-3-methylbut-2-en-1-yl diphosphate synthase (flavodoxin) (Macrococcus caseolyticus (strain JCSC5402) (Macrococcoides caseolyticum)).